Reading from the N-terminus, the 156-residue chain is Small ribosomal subunit protein uS7 (156 aa).

This sequence belongs to the universal ribosomal protein uS7 family. As to quaternary structure, part of the 30S ribosomal subunit. Contacts proteins S9 and S11.

Its function is as follows. One of the primary rRNA binding proteins, it binds directly to 16S rRNA where it nucleates assembly of the head domain of the 30S subunit. Is located at the subunit interface close to the decoding center, probably blocks exit of the E-site tRNA. In Rhodobacter capsulatus (Rhodopseudomonas capsulata), this protein is Small ribosomal subunit protein uS7.